Reading from the N-terminus, the 271-residue chain is NH(3)-dependent NAD(+) synthetase (271 aa).

43-50 (GISGGQDS) contacts ATP. Aspartate 49 provides a ligand contact to Mg(2+). Arginine 137 lines the deamido-NAD(+) pocket. Threonine 157 provides a ligand contact to ATP. Glutamate 162 contributes to the Mg(2+) binding site. Deamido-NAD(+) contacts are provided by lysine 170 and aspartate 177. ATP-binding residues include lysine 186 and threonine 208. Residue 257–258 (HK) participates in deamido-NAD(+) binding.

The protein belongs to the NAD synthetase family. Homodimer.

It catalyses the reaction deamido-NAD(+) + NH4(+) + ATP = AMP + diphosphate + NAD(+) + H(+). The protein operates within cofactor biosynthesis; NAD(+) biosynthesis; NAD(+) from deamido-NAD(+) (ammonia route): step 1/1. Functionally, catalyzes the ATP-dependent amidation of deamido-NAD to form NAD. Uses ammonia as a nitrogen source. The protein is NH(3)-dependent NAD(+) synthetase of Exiguobacterium sp. (strain ATCC BAA-1283 / AT1b).